Here is a 345-residue protein sequence, read N- to C-terminus: Phosphoribosylformylglycinamidine cyclo-ligase (345 aa).

This sequence belongs to the AIR synthase family.

Its subcellular location is the cytoplasm. The catalysed reaction is 2-formamido-N(1)-(5-O-phospho-beta-D-ribosyl)acetamidine + ATP = 5-amino-1-(5-phospho-beta-D-ribosyl)imidazole + ADP + phosphate + H(+). Its pathway is purine metabolism; IMP biosynthesis via de novo pathway; 5-amino-1-(5-phospho-D-ribosyl)imidazole from N(2)-formyl-N(1)-(5-phospho-D-ribosyl)glycinamide: step 2/2. This is Phosphoribosylformylglycinamidine cyclo-ligase from Bifidobacterium longum (strain DJO10A).